We begin with the raw amino-acid sequence, 165 residues long: Putative pre-16S rRNA nuclease (165 aa).

It belongs to the YqgF nuclease family.

It is found in the cytoplasm. Could be a nuclease involved in processing of the 5'-end of pre-16S rRNA. This chain is Putative pre-16S rRNA nuclease, found in Beijerinckia indica subsp. indica (strain ATCC 9039 / DSM 1715 / NCIMB 8712).